Reading from the N-terminus, the 25-residue chain is Hemocyanin subunit 2 (25 aa).

Belongs to the tyrosinase family. Hemocyanin subfamily. In terms of tissue distribution, hemolymph.

Its subcellular location is the secreted. The protein localises to the extracellular space. Hemocyanins are copper-containing oxygen carriers occurring freely dissolved in the hemolymph of many mollusks and arthropods. This is Hemocyanin subunit 2 from Carcinus maenas (Common shore crab).